A 796-amino-acid chain; its full sequence is Armadillo repeat-containing protein wrm-1 (796 aa).

The disordered stretch occupies residues Asn-17–Asn-59. The ARM repeat unit spans residues Glu-462 to Gly-504.

Interacts (independently of ARM repeat) with nhr-25. Component of the beta-catenin-lit-1 complex (also called the lit-1/wrm-1 complex or the wrm-1/lit-1 kinase complex) at least composed of lit-1 and wrm-1. Interacts (via N-terminus) with lit-1; the interaction is direct and activates lit-1 kinase activity which leads to the phosphorylation of pop-1. This promotes pop-1 interaction with par-5 and translocation of pop-1 from the nucleus to the cytoplasm.

It is found in the cytoplasm. Its subcellular location is the cell cortex. The protein localises to the nucleus. In terms of biological role, antagonistic role in the Wnt signaling pathway that operates in embryogenesis. When located at the cortex it has been shown to inhibit Wnt signaling during asymmetric cell division but when relocated to the nucleus it shows positive regulation. Has a role in blastomere signaling during endoderm specification. Component of the beta-catenin-lit-1 complex which promotes phosphorylation, down-regulation and subcellular relocation of pop-1. Within the complex, activates lit-1-dependent kinase activity. Can substitute for bar-1 indicating functional redundancy. Appears to have a role in centrosome positioning and can activation transcription in yeast. Involved in the development of distal tip cells (DTC) by regulating the asymmetric distribution of cye-1 and cki-1 between the daughters of Z1.a and Z4.p cells. This chain is Armadillo repeat-containing protein wrm-1, found in Caenorhabditis elegans.